A 324-amino-acid polypeptide reads, in one-letter code: tRNA dimethylallyltransferase (324 aa).

17–24 (GPTASGKT) serves as a coordination point for ATP. 19–24 (TASGKT) is a substrate binding site. Interaction with substrate tRNA regions lie at residues 42–45 (DSAL), 166–170 (QRIQR), 251–256 (RCVGYR), and 284–291 (KRQITWLR).

The protein belongs to the IPP transferase family. In terms of assembly, monomer. The cofactor is Mg(2+).

The enzyme catalyses adenosine(37) in tRNA + dimethylallyl diphosphate = N(6)-dimethylallyladenosine(37) in tRNA + diphosphate. Catalyzes the transfer of a dimethylallyl group onto the adenine at position 37 in tRNAs that read codons beginning with uridine, leading to the formation of N6-(dimethylallyl)adenosine (i(6)A). The protein is tRNA dimethylallyltransferase of Burkholderia lata (strain ATCC 17760 / DSM 23089 / LMG 22485 / NCIMB 9086 / R18194 / 383).